Here is an 87-residue protein sequence, read N- to C-terminus: Sec-independent protein translocase protein TatA (87 aa).

A helical membrane pass occupies residues 1–21 (MGSFSIWHWLIVLLIVVMVFG). The disordered stretch occupies residues 40–87 (KDGMKDGSTPEGTPASTTAATPPAGQVTNQQAHAADPGTIDVEAKHKG). Residues 46–64 (GSTPEGTPASTTAATPPAG) are compositionally biased toward low complexity.

Belongs to the TatA/E family. The Tat system comprises two distinct complexes: a TatABC complex, containing multiple copies of TatA, TatB and TatC subunits, and a separate TatA complex, containing only TatA subunits. Substrates initially bind to the TatABC complex, which probably triggers association of the separate TatA complex to form the active translocon.

Its subcellular location is the cell inner membrane. Functionally, part of the twin-arginine translocation (Tat) system that transports large folded proteins containing a characteristic twin-arginine motif in their signal peptide across membranes. TatA could form the protein-conducting channel of the Tat system. The chain is Sec-independent protein translocase protein TatA from Paracidovorax citrulli (strain AAC00-1) (Acidovorax citrulli).